Consider the following 676-residue polypeptide: Periplasmic alpha-amylase (676 aa).

An N-terminal signal peptide occupies residues 1-17; it reads MKLAACFLTLLPGFAVA. 2 cysteine pairs are disulfide-bonded: Cys-57-Cys-75 and Cys-121-Cys-537. Asn-314 serves as a coordination point for Ca(2+). The active-site Nucleophile is Asp-460. His-464 is a Ca(2+) binding site. Glu-503 functions as the Proton donor in the catalytic mechanism.

Belongs to the glycosyl hydrolase 13 family. Monomer. It depends on Ca(2+) as a cofactor.

It is found in the periplasm. The enzyme catalyses Endohydrolysis of (1-&gt;4)-alpha-D-glucosidic linkages in polysaccharides containing three or more (1-&gt;4)-alpha-linked D-glucose units.. Since only maltooligosaccharides up to a chain length of 6 glucose units are actively transported through the cytoplasmic membrane via the membrane-bound complex of three proteins, MalF, MalG, and MalK, longer maltooligosaccharides must first be degraded by the periplasmic alpha-amylase, the MalS protein. In Escherichia coli (strain K12), this protein is Periplasmic alpha-amylase (malS).